A 361-amino-acid polypeptide reads, in one-letter code: POU domain, class 3, transcription factor 4 (361 aa).

Disordered stretches follow at residues 99 to 131 and 144 to 192; these read PHVA…GQPL and MLEH…PTSD. Residues 122–131 show a composition bias toward polar residues; the sequence is PSITSSGQPL. Residues 165 to 183 are compositionally biased toward basic and acidic residues; the sequence is VLREPPDHGELGSHHCQDH. The 75-residue stretch at 186-260 folds into the POU-specific domain; the sequence is EETPTSDELE…LLNKWLEEAD (75 aa). Position 265 is a phosphoserine (Ser265). The homeobox DNA-binding region spans 278 to 337; the sequence is KRKKRTSIEVSVKGVLETHFLKCPKPAAQEISSLADSLQLEKEVVRVWFCNRRQKEKRMT.

It belongs to the POU transcription factor family. Class-3 subfamily. Interacts with HNRNPU. As to expression, brain specific.

It localises to the nucleus. Probable transcription factor which exert its primary action widely during early neural development and in a very limited set of neurons in the mature brain. The chain is POU domain, class 3, transcription factor 4 (POU3F4) from Homo sapiens (Human).